The following is an 83-amino-acid chain: Retinal cone rhodopsin-sensitive cGMP 3',5'-cyclic phosphodiesterase subunit gamma (83 aa).

A disordered region spans residues 1–54 (MSDSPSLSPPAPSQGPTTPRKGPPKFKQRQTRQFKSKPPKKGVKGFGDDIPGME). The span at 22 to 43 (GPPKFKQRQTRQFKSKPPKKGV) shows a compositional bias: basic residues.

This sequence belongs to the rod/cone cGMP-PDE gamma subunit family. In terms of assembly, tetramer composed of two catalytic chains (alpha and beta), and two inhibitory chains (gamma).

It catalyses the reaction 3',5'-cyclic GMP + H2O = GMP + H(+). Functionally, participates in processes of transmission and amplification of the visual signal. cGMP-PDEs are the effector molecules in G-protein-mediated phototransduction in vertebrate rods and cones. The protein is Retinal cone rhodopsin-sensitive cGMP 3',5'-cyclic phosphodiesterase subunit gamma (Pde6h) of Mus musculus (Mouse).